The following is a 149-amino-acid chain: Large ribosomal subunit protein bL20m (149 aa).

A mitochondrion-targeting transit peptide spans 1 to 9 (MVFLTTRLW).

It belongs to the bacterial ribosomal protein bL20 family. In terms of assembly, component of the mitochondrial ribosome large subunit (39S) which comprises a 16S rRNA and about 50 distinct proteins. Interacts with OXA1L.

The protein resides in the mitochondrion. This Mus musculus (Mouse) protein is Large ribosomal subunit protein bL20m (Mrpl20).